The sequence spans 505 residues: Aspartyl/glutamyl-tRNA(Asn/Gln) amidotransferase subunit B (505 aa).

Belongs to the GatB/GatE family. GatB subfamily. Heterotrimer of A, B and C subunits.

The enzyme catalyses L-glutamyl-tRNA(Gln) + L-glutamine + ATP + H2O = L-glutaminyl-tRNA(Gln) + L-glutamate + ADP + phosphate + H(+). It carries out the reaction L-aspartyl-tRNA(Asn) + L-glutamine + ATP + H2O = L-asparaginyl-tRNA(Asn) + L-glutamate + ADP + phosphate + 2 H(+). In terms of biological role, allows the formation of correctly charged Asn-tRNA(Asn) or Gln-tRNA(Gln) through the transamidation of misacylated Asp-tRNA(Asn) or Glu-tRNA(Gln) in organisms which lack either or both of asparaginyl-tRNA or glutaminyl-tRNA synthetases. The reaction takes place in the presence of glutamine and ATP through an activated phospho-Asp-tRNA(Asn) or phospho-Glu-tRNA(Gln). The protein is Aspartyl/glutamyl-tRNA(Asn/Gln) amidotransferase subunit B of Corynebacterium jeikeium (strain K411).